A 248-amino-acid polypeptide reads, in one-letter code: 1-(5-phosphoribosyl)-5-[(5-phosphoribosylamino)methylideneamino] imidazole-4-carboxamide isomerase (248 aa).

The Proton acceptor role is filled by aspartate 8. Aspartate 127 functions as the Proton donor in the catalytic mechanism.

It belongs to the HisA/HisF family.

It is found in the cytoplasm. It carries out the reaction 1-(5-phospho-beta-D-ribosyl)-5-[(5-phospho-beta-D-ribosylamino)methylideneamino]imidazole-4-carboxamide = 5-[(5-phospho-1-deoxy-D-ribulos-1-ylimino)methylamino]-1-(5-phospho-beta-D-ribosyl)imidazole-4-carboxamide. It functions in the pathway amino-acid biosynthesis; L-histidine biosynthesis; L-histidine from 5-phospho-alpha-D-ribose 1-diphosphate: step 4/9. The protein is 1-(5-phosphoribosyl)-5-[(5-phosphoribosylamino)methylideneamino] imidazole-4-carboxamide isomerase of Thermotoga neapolitana (strain ATCC 49049 / DSM 4359 / NBRC 107923 / NS-E).